The chain runs to 140 residues: Low calcium response locus protein T (140 aa).

This chain is Low calcium response locus protein T (lcrT), found in Yersinia pestis.